A 406-amino-acid polypeptide reads, in one-letter code: Endoplasmic reticulum resident protein 44 (406 aa).

A signal peptide spans 1-29 (MNPAVFLSLADLRCSLLLLVTSIFTPITA). The Thioredoxin domain maps to 30-138 (EIASLDSENI…VKALADYIRQ (109 aa)). 2 disulfide bridges follow: C189–C241 and C301–C318. The tract at residues 236–285 (WIQDKCVPLVREITFENGEELTEEGLPFLILFHMKDDTESLEIFQNEVAR) is interaction with ITPR1. A disordered region spans residues 360-387 (FHHGPDPTDTAPGEQDQDVASSPPESSF). The segment covering 377 to 387 (DVASSPPESSF) has biased composition (polar residues). A Prevents secretion from ER motif is present at residues 403 to 406 (RDEL).

In terms of assembly, forms mixed disulfides with both ERO1A and ERO1B and cargo folding intermediates; the interactions with ERO1A and ERO1B result in their retention in the endoplasmic reticulum. Directly interacts with ITPR1 in a pH-, redox state- and calcium-dependent manner, but not with ITPR2 or ITPR3. The strength of this interaction inversely correlates with calcium concentration. Widely expressed.

The protein localises to the endoplasmic reticulum lumen. Its function is as follows. Mediates thiol-dependent retention in the early secretory pathway, forming mixed disulfides with substrate proteins through its conserved CRFS motif. Inhibits the calcium channel activity of ITPR1. May have a role in the control of oxidative protein folding in the endoplasmic reticulum. Required to retain ERO1A and ERO1B in the endoplasmic reticulum. The protein is Endoplasmic reticulum resident protein 44 (Erp44) of Mus musculus (Mouse).